The following is a 152-amino-acid chain: Vasotocin-neurophysin VT 1 (152 aa).

Positions 1–19 (MSDSFLPTCILCLLALSSA) are cleaved as a signal peptide. Cysteines 20 and 25 form a disulfide. Glycine 28 is modified (glycine amide). 7 cysteine pairs are disulfide-bonded: cysteine 40-cysteine 84, cysteine 43-cysteine 57, cysteine 51-cysteine 74, cysteine 58-cysteine 64, cysteine 91-cysteine 103, cysteine 97-cysteine 115, and cysteine 104-cysteine 109.

It belongs to the vasopressin/oxytocin family.

It localises to the secreted. Functionally, vasotocin is an antidiuretic hormone. The sequence is that of Vasotocin-neurophysin VT 1 from Catostomus commersonii (White sucker).